The primary structure comprises 280 residues: Shikimate dehydrogenase (NADP(+)) (280 aa).

Shikimate-binding positions include 15-17 (SLS) and threonine 62. Lysine 66 serves as the catalytic Proton acceptor. Shikimate-binding residues include asparagine 88 and aspartate 104. Residues 128-132 (GAGGA), 151-156 (NRTEER), and isoleucine 222 each bind NADP(+). Tyrosine 224 is a binding site for shikimate. Glycine 245 serves as a coordination point for NADP(+).

This sequence belongs to the shikimate dehydrogenase family. As to quaternary structure, homodimer.

It catalyses the reaction shikimate + NADP(+) = 3-dehydroshikimate + NADPH + H(+). It participates in metabolic intermediate biosynthesis; chorismate biosynthesis; chorismate from D-erythrose 4-phosphate and phosphoenolpyruvate: step 4/7. In terms of biological role, involved in the biosynthesis of the chorismate, which leads to the biosynthesis of aromatic amino acids. Catalyzes the reversible NADPH linked reduction of 3-dehydroshikimate (DHSA) to yield shikimate (SA). This Methanosarcina mazei (strain ATCC BAA-159 / DSM 3647 / Goe1 / Go1 / JCM 11833 / OCM 88) (Methanosarcina frisia) protein is Shikimate dehydrogenase (NADP(+)).